The primary structure comprises 341 residues: MNTATQAPKDSADSATERFRYGFLKGNPQLTKNGELKHLLSIEGLPKAIVNHILDTADQFVSVTDREVKKVPLLRGKSVFNLFFENSTRTRTTFEIAATRLSADVLNLNINASSTSKGESLLDTINNLSAMHADMFVVRHASSGAPYLIAQHCAPHVHVINAGDGRHAHPTQGLLDMYTIRHYKKDFTKLRVAIVGDILHSRVARSDIHALTTLGVPEVRAIGPRTLLPGGLEQMGVRVFHNLDEGLKDVDVIIMLRLQNERMSGALLPSAQEYFKSWGLTPERLALAAPDAIVMHPGPMNRGVEIDSQVADGPQSVILNQVTFGIAVRMAVMGIVAGNHD.

The carbamoyl phosphate site is built by Arg89 and Thr90. Lys117 lines the L-aspartate pocket. Residues Arg139, His169, and Gln172 each contribute to the carbamoyl phosphate site. 2 residues coordinate L-aspartate: Arg202 and Arg257. Carbamoyl phosphate contacts are provided by Gly298 and Pro299.

This sequence belongs to the aspartate/ornithine carbamoyltransferase superfamily. ATCase family. Heterododecamer (2C3:3R2) of six catalytic PyrB chains organized as two trimers (C3), and six regulatory PyrI chains organized as three dimers (R2).

The enzyme catalyses carbamoyl phosphate + L-aspartate = N-carbamoyl-L-aspartate + phosphate + H(+). Its pathway is pyrimidine metabolism; UMP biosynthesis via de novo pathway; (S)-dihydroorotate from bicarbonate: step 2/3. In terms of biological role, catalyzes the condensation of carbamoyl phosphate and aspartate to form carbamoyl aspartate and inorganic phosphate, the committed step in the de novo pyrimidine nucleotide biosynthesis pathway. In Paraburkholderia phytofirmans (strain DSM 17436 / LMG 22146 / PsJN) (Burkholderia phytofirmans), this protein is Aspartate carbamoyltransferase catalytic subunit.